The primary structure comprises 132 residues: MSKSLNIIWQYIRAFVLIYACLYAGIFIASLLPITIPGSIIGMLILFVLLALQILPAKWVNPGCYVLIRYMALLFVPIGVGVMQYFDLLRAQFGPVVVSCAISTLVVFVVVSWSSHLIHGERNVVGQKGSKK.

A run of 4 helical transmembrane segments spans residues 7 to 27 (IIWQ…AGIF), 31 to 51 (LLPI…VLLA), 63 to 83 (GCYV…VGVM), and 93 to 113 (FGPV…VVSW).

Belongs to the UPF0299 family.

The protein resides in the cell inner membrane. This chain is UPF0299 membrane protein YohJ, found in Salmonella arizonae (strain ATCC BAA-731 / CDC346-86 / RSK2980).